The following is a 385-amino-acid chain: Chaperone protein DnaJ (385 aa).

In terms of domain architecture, J spans aspartate 5–glycine 70. A CR-type zinc finger spans residues glycine 143–aspartate 221. Residues cysteine 156, cysteine 159, cysteine 173, cysteine 176, cysteine 195, cysteine 198, cysteine 209, and cysteine 212 each coordinate Zn(2+). CXXCXGXG motif repeat units lie at residues cysteine 156–glycine 163, cysteine 173–glycine 180, cysteine 195–glycine 202, and cysteine 209–glycine 216. A disordered region spans residues glycine 299–methionine 323.

Belongs to the DnaJ family. As to quaternary structure, homodimer. It depends on Zn(2+) as a cofactor.

The protein resides in the cytoplasm. Participates actively in the response to hyperosmotic and heat shock by preventing the aggregation of stress-denatured proteins and by disaggregating proteins, also in an autonomous, DnaK-independent fashion. Unfolded proteins bind initially to DnaJ; upon interaction with the DnaJ-bound protein, DnaK hydrolyzes its bound ATP, resulting in the formation of a stable complex. GrpE releases ADP from DnaK; ATP binding to DnaK triggers the release of the substrate protein, thus completing the reaction cycle. Several rounds of ATP-dependent interactions between DnaJ, DnaK and GrpE are required for fully efficient folding. Also involved, together with DnaK and GrpE, in the DNA replication of plasmids through activation of initiation proteins. This Jannaschia sp. (strain CCS1) protein is Chaperone protein DnaJ.